A 269-amino-acid chain; its full sequence is Chromosome-partitioning protein Spo0J (269 aa).

A stimulates ATPase activity of Soj by 8% region spans residues 1–20 (MSRKPSGLGRGLEALLPKTG). The H-T-H motif DNA-binding region spans 137-156 (QEEVARRVGKARSTVANALR). The tract at residues 223 to 269 (PSPLSLELSRHLGLPVRVVGGKKGKVVIQYRSLEELEALLRRLGYQA) is required for DNA-binding; may be responsible for dimerization.

It belongs to the ParB family. In terms of assembly, homodimer, probably via the C-terminal 46 residues. Dimerization of the N-terminal H-T-H region may require DNA-binding. Probably interacts with ATPase Soj.

Functionally, probably involved in chromosome partitioning. Binds to a plasmid centromere-like site parS. Stimulates the ATPase activity 10-fold of Soj; the first 20 residues may be responsible. This is Chromosome-partitioning protein Spo0J (spo0C) from Thermus thermophilus (strain ATCC BAA-163 / DSM 7039 / HB27).